We begin with the raw amino-acid sequence, 359 residues long: Protein Wnt-5b (359 aa).

An N-terminal signal peptide occupies residues 1 to 17 (MPSLLLLFTAALLSSWA). A disulfide bridge links Cys-83 with Cys-94. Asn-93 and Asn-99 each carry an N-linked (GlcNAc...) asparagine glycan. Intrachain disulfides connect Cys-133/Cys-141, Cys-143/Cys-161, Cys-217/Cys-231, Cys-219/Cys-226, Cys-288/Cys-319, Cys-304/Cys-314, Cys-318/Cys-358, Cys-334/Cys-349, Cys-336/Cys-346, and Cys-341/Cys-342. The O-palmitoleoyl serine; by PORCN moiety is linked to residue Ser-223. Residues Asn-291 and Asn-305 are each glycosylated (N-linked (GlcNAc...) asparagine).

The protein belongs to the Wnt family. As to quaternary structure, interacts with PORCN. Palmitoleoylation is required for efficient binding to frizzled receptors. Depalmitoleoylation leads to Wnt signaling pathway inhibition.

It localises to the secreted. The protein localises to the extracellular space. It is found in the extracellular matrix. Functionally, ligand for members of the frizzled family of seven transmembrane receptors. Probable developmental protein. May be a signaling molecule which affects the development of discrete regions of tissues. Is likely to signal over only few cell diameters. The polypeptide is Protein Wnt-5b (WNT5B) (Homo sapiens (Human)).